The chain runs to 287 residues: ATP synthase gamma chain (287 aa).

The protein belongs to the ATPase gamma chain family. In terms of assembly, F-type ATPases have 2 components, CF(1) - the catalytic core - and CF(0) - the membrane proton channel. CF(1) has five subunits: alpha(3), beta(3), gamma(1), delta(1), epsilon(1). CF(0) has three main subunits: a, b and c.

It is found in the cell inner membrane. Functionally, produces ATP from ADP in the presence of a proton gradient across the membrane. The gamma chain is believed to be important in regulating ATPase activity and the flow of protons through the CF(0) complex. The protein is ATP synthase gamma chain of Geotalea daltonii (strain DSM 22248 / JCM 15807 / FRC-32) (Geobacter daltonii).